Consider the following 742-residue polypeptide: Protein-lysine N-methyltransferase SMYD4 (742 aa).

110–112 (RSA) contacts S-adenosyl-L-methionine. Residues 230–569 (SSLSLNFSTE…SGQEIFHCYG (340 aa)) enclose the SET domain. The Zn(2+) site is built by Cys-295, Cys-298, Cys-308, Cys-311, Cys-317, Cys-321, His-330, and Cys-334. The segment at 295–334 (CHHCLKQLLASIPCCGCSYAKYCSQNCADVAWEQYHRTEC) adopts an MYND-type zinc-finger fold. Residues Asn-418, 534-535 (NH), and Tyr-568 each bind S-adenosyl-L-methionine.

Belongs to the class V-like SAM-binding methyltransferase superfamily.

It is found in the nucleus. Its subcellular location is the cytoplasm. The catalysed reaction is L-lysyl-[protein] + S-adenosyl-L-methionine = N(6)-methyl-L-lysyl-[protein] + S-adenosyl-L-homocysteine + H(+). In terms of biological role, protein-lysine N-methyltransferase. Monomethylates PRMT5, modulating its transcriptional activity. May also act as a histone methyltransferase. Plays a critical role in cardiac development. Acts as a key epigenetic regulator of gene expression during cardiac development via its dual activities as a methyltransferase and negative regulator of HDAC1. This Gallus gallus (Chicken) protein is Protein-lysine N-methyltransferase SMYD4 (SMYD4).